A 435-amino-acid polypeptide reads, in one-letter code: Aspartate--tRNA(Asp/Asn) ligase (435 aa).

Glutamate 163 serves as a coordination point for L-aspartate. Residues 185–188 (QLYK) are aspartate. Arginine 206 contacts L-aspartate. Residues 206-208 (RAE), 214-216 (RHL), and glutamate 358 contribute to the ATP site. L-aspartate contacts are provided by serine 361 and arginine 365. 406–409 (GAER) is a binding site for ATP.

This sequence belongs to the class-II aminoacyl-tRNA synthetase family. Type 2 subfamily. Homodimer.

It is found in the cytoplasm. It carries out the reaction tRNA(Asx) + L-aspartate + ATP = L-aspartyl-tRNA(Asx) + AMP + diphosphate. Aspartyl-tRNA synthetase with relaxed tRNA specificity since it is able to aspartylate not only its cognate tRNA(Asp) but also tRNA(Asn). Reaction proceeds in two steps: L-aspartate is first activated by ATP to form Asp-AMP and then transferred to the acceptor end of tRNA(Asp/Asn). Is slightly more efficient at aminoacylating tRNA(Asn) over tRNA(Asp). This Deinococcus radiodurans (strain ATCC 13939 / DSM 20539 / JCM 16871 / CCUG 27074 / LMG 4051 / NBRC 15346 / NCIMB 9279 / VKM B-1422 / R1) protein is Aspartate--tRNA(Asp/Asn) ligase (aspS2).